Consider the following 502-residue polypeptide: Glycerol kinase (502 aa).

T14 is an ADP binding site. Residues T14, T15, and S16 each contribute to the ATP site. T14 lines the sn-glycerol 3-phosphate pocket. R18 is an ADP binding site. Sn-glycerol 3-phosphate is bound by residues R84, E85, and Y136. Residues R84, E85, and Y136 each coordinate glycerol. Phosphohistidine; by HPr is present on H232. D246 contacts sn-glycerol 3-phosphate. D246 and Q247 together coordinate glycerol. ADP is bound by residues T268 and G311. ATP contacts are provided by T268, G311, Q315, and G412. 2 residues coordinate ADP: G412 and N416.

The protein belongs to the FGGY kinase family. In terms of assembly, homotetramer and homodimer (in equilibrium). Post-translationally, the phosphoenolpyruvate-dependent sugar phosphotransferase system (PTS), including enzyme I, and histidine-containing protein (HPr) are required for the phosphorylation, which leads to the activation of the enzyme.

It carries out the reaction glycerol + ATP = sn-glycerol 3-phosphate + ADP + H(+). Its pathway is polyol metabolism; glycerol degradation via glycerol kinase pathway; sn-glycerol 3-phosphate from glycerol: step 1/1. Activated by phosphorylation and inhibited by fructose 1,6-bisphosphate (FBP). Its function is as follows. Key enzyme in the regulation of glycerol uptake and metabolism. Catalyzes the phosphorylation of glycerol to yield sn-glycerol 3-phosphate. The polypeptide is Glycerol kinase (Streptococcus pneumoniae (strain Hungary19A-6)).